The chain runs to 152 residues: MDYTISEFGKVFLFLLFGVVFVIGGYVSSRMLRPHRPNDEKLTSYECGEEAVGSAWVQFNIRFYVVALIFIIFDVEVLFLFPWATVFKQLGGFALFEAVIFVTILTLGLVYAWVKGDLDWVRPTPNVPKMPEKRFDNISSGRSQVVKEESVS.

The next 3 helical transmembrane spans lie at 8–28 (FGKV…GYVS), 63–83 (FYVV…LFPW), and 90–110 (LGGF…LGLV).

Belongs to the complex I subunit 3 family. NDH-1 is composed of 14 different subunits. Subunits NuoA, H, J, K, L, M, N constitute the membrane sector of the complex.

Its subcellular location is the cell inner membrane. It catalyses the reaction a quinone + NADH + 5 H(+)(in) = a quinol + NAD(+) + 4 H(+)(out). Functionally, NDH-1 shuttles electrons from NADH, via FMN and iron-sulfur (Fe-S) centers, to quinones in the respiratory chain. The immediate electron acceptor for the enzyme in this species is believed to be a menaquinone. Couples the redox reaction to proton translocation (for every two electrons transferred, four hydrogen ions are translocated across the cytoplasmic membrane), and thus conserves the redox energy in a proton gradient. The polypeptide is NADH-quinone oxidoreductase subunit A 2 (Chloroherpeton thalassium (strain ATCC 35110 / GB-78)).